The chain runs to 438 residues: GTPase Der (438 aa).

2 EngA-type G domains span residues 4 to 168 and 177 to 352; these read PIVA…NDPS and IRIA…DNYS. Residues 10-17, 57-61, 120-123, 183-190, 230-234, and 295-298 contribute to the GTP site; these read GRPNVGKS, DTGGI, NKID, GKPNVGKS, DTAGL, and NKWD. The KH-like domain maps to 353–437; it reads KRVSTGLLND…GIEIEYRARK (85 aa).

It belongs to the TRAFAC class TrmE-Era-EngA-EngB-Septin-like GTPase superfamily. EngA (Der) GTPase family. As to quaternary structure, associates with the 50S ribosomal subunit.

GTPase that plays an essential role in the late steps of ribosome biogenesis. This is GTPase Der from Clostridium perfringens (strain ATCC 13124 / DSM 756 / JCM 1290 / NCIMB 6125 / NCTC 8237 / Type A).